The sequence spans 406 residues: MAKVHKDVKKIVLAYSGGLDTSIILKWLKNEYGCEVIAFSADLGQGDELAPIRDKAFATGADKVYIDDLKEEFVRDFVFPMFRANAIYEGHYLLGTSIARPLIAKRQMEIAKIEGADAVSHGATGKGNDQVRFELAYYHFDPAITVVVPWREWKLNSRQALVNYAKKNGIPIPVTKKRPWSSDRNMLHISFEGGILEDTWAEPPENMYVLTKAPEKAPNKPQFVEIEFKNGNAVAVDGEKMSPAQLLAHLNYIGGEHGIGRVDLLENRSVGMKSRGVYETPGGTILREAHSAVEQITMDREVMRIRDSLIPEYARQVYSGYWFSPEREMLQTLIDDSQKCVNGVARVKLYKGHCRTVGRKSETNSLFNLDFATFEKDQVFNQADATGFIKINSLRLRIRALMQGKK.

Residues 14–22 (AYSGGLDTS) and Ala41 each bind ATP. The L-citrulline site is built by Tyr92 and Ser97. An ATP-binding site is contributed by Gly122. The L-aspartate site is built by Thr124, Asn128, and Asp129. Asn128 lines the L-citrulline pocket. Residues Arg132, Ser181, Ser190, Glu266, and Tyr278 each coordinate L-citrulline.

Belongs to the argininosuccinate synthase family. Type 1 subfamily. Homotetramer.

It is found in the cytoplasm. The catalysed reaction is L-citrulline + L-aspartate + ATP = 2-(N(omega)-L-arginino)succinate + AMP + diphosphate + H(+). It participates in amino-acid biosynthesis; L-arginine biosynthesis; L-arginine from L-ornithine and carbamoyl phosphate: step 2/3. In Geobacter metallireducens (strain ATCC 53774 / DSM 7210 / GS-15), this protein is Argininosuccinate synthase.